The primary structure comprises 236 residues: Small ribosomal subunit protein uS3 (236 aa).

The 69-residue stretch at 38 to 106 (LRRYLHTRLK…DIQINISEIK (69 aa)) folds into the KH type-2 domain. The tract at residues 211–236 (DLSPNVQAQQRKMKESPQQRRQRRGG) is disordered.

This sequence belongs to the universal ribosomal protein uS3 family. Part of the 30S ribosomal subunit. Forms a tight complex with proteins S10 and S14.

Binds the lower part of the 30S subunit head. Binds mRNA in the 70S ribosome, positioning it for translation. In Salinibacter ruber (strain DSM 13855 / M31), this protein is Small ribosomal subunit protein uS3.